Reading from the N-terminus, the 541-residue chain is Glucose-6-phosphate isomerase (541 aa).

Glu346 serves as the catalytic Proton donor. Active-site residues include His377 and Lys506.

This sequence belongs to the GPI family.

Its subcellular location is the cytoplasm. The enzyme catalyses alpha-D-glucose 6-phosphate = beta-D-fructose 6-phosphate. Its pathway is carbohydrate biosynthesis; gluconeogenesis. The protein operates within carbohydrate degradation; glycolysis; D-glyceraldehyde 3-phosphate and glycerone phosphate from D-glucose: step 2/4. In terms of biological role, catalyzes the reversible isomerization of glucose-6-phosphate to fructose-6-phosphate. The protein is Glucose-6-phosphate isomerase of Rhizobium johnstonii (strain DSM 114642 / LMG 32736 / 3841) (Rhizobium leguminosarum bv. viciae).